Here is a 249-residue protein sequence, read N- to C-terminus: Orotidine 5'-phosphate decarboxylase (249 aa).

Substrate-binding positions include Asp-21, Lys-43, 72-81, Thr-128, Arg-193, Gln-204, Gly-224, and Arg-225; that span reads DLKLYDIPET. Lys-74 (proton donor) is an active-site residue.

It belongs to the OMP decarboxylase family. Type 1 subfamily. Homodimer.

The catalysed reaction is orotidine 5'-phosphate + H(+) = UMP + CO2. The protein operates within pyrimidine metabolism; UMP biosynthesis via de novo pathway; UMP from orotate: step 2/2. In terms of biological role, catalyzes the decarboxylation of orotidine 5'-monophosphate (OMP) to uridine 5'-monophosphate (UMP). The sequence is that of Orotidine 5'-phosphate decarboxylase from Desulfosudis oleivorans (strain DSM 6200 / JCM 39069 / Hxd3) (Desulfococcus oleovorans).